The primary structure comprises 61 residues: Large ribosomal subunit protein bL28 (61 aa).

The protein belongs to the bacterial ribosomal protein bL28 family.

In Lachnospira eligens (strain ATCC 27750 / DSM 3376 / VPI C15-48 / C15-B4) (Eubacterium eligens), this protein is Large ribosomal subunit protein bL28.